A 383-amino-acid polypeptide reads, in one-letter code: Protein arginine N-methyltransferase PRMT10 (383 aa).

The tract at residues 1–23 (MRSSQNGGAMGGRAAGTGGGGPS) is disordered. Residues 8–22 (GAMGGRAAGTGGGGP) show a composition bias toward gly residues. Residues 29–360 (EVDYAQYFCT…KENHRLMEIE (332 aa)) form the SAM-dependent MTase PRMT-type domain. Residues Q45, R54, G78, E100, and E129 each coordinate S-adenosyl-L-methionine. Active-site residues include E143 and E152. A dimerization arm region spans residues 190 to 230 (DRKRNDFDGAMADWHNFSDEIKSYYGVDMGVLTKPFAEEQE).

It belongs to the class I-like SAM-binding methyltransferase superfamily. Protein arginine N-methyltransferase family. In terms of assembly, ring-like homodimer.

It catalyses the reaction L-arginyl-[protein] + 2 S-adenosyl-L-methionine = N(omega),N(omega)-dimethyl-L-arginyl-[protein] + 2 S-adenosyl-L-homocysteine + 2 H(+). Its function is as follows. Methylates (mono and asymmetric dimethylation) the guanidino nitrogens of arginyl residues in some proteins. Essential for regulating flowering time. This Arabidopsis thaliana (Mouse-ear cress) protein is Protein arginine N-methyltransferase PRMT10 (PRMT10).